We begin with the raw amino-acid sequence, 184 residues long: Transposon Tn917 resolvase (184 aa).

A Resolvase/invertase-type recombinase catalytic domain is found at 1 to 134 (MIFGYARVST…SGLKAARVRG (134 aa)). Residue Ser-9 is the O-(5'-phospho-DNA)-serine intermediate of the active site. The H-T-H motif DNA-binding region spans 161 to 180 (IRQILDASKLSKTTFYRYLN).

This sequence belongs to the site-specific recombinase resolvase family.

Resolvase catalyzes the resolution (a site-specific recombination) of the cointegrated replicon to yield the final transposition products. The protein is Transposon Tn917 resolvase (tnpR) of Enterococcus faecalis (Streptococcus faecalis).